We begin with the raw amino-acid sequence, 103 residues long: Histone H4, minor (103 aa).

Gly residues predominate over residues 1–12 (MAGGKGGKGMGK). A disordered region spans residues 1-29 (MAGGKGGKGMGKVGAKRHSRKSNKASIEG). N6-acetyllysine is present on residues Lys-5, Lys-8, Lys-12, and Lys-16. Positions 14 to 23 (GAKRHSRKSN) are enriched in basic residues. Residues 16 to 21 (KRHSRK) mediate DNA binding.

This sequence belongs to the histone H4 family. The nucleosome is a histone octamer containing two molecules each of H2A, H2B, H3 and H4 assembled in one H3-H4 heterotetramer and two H2A-H2B heterodimers. The octamer wraps approximately 147 bp of DNA.

The protein resides in the nucleus. It is found in the chromosome. Its function is as follows. Core component of nucleosome. Nucleosomes wrap and compact DNA into chromatin, limiting DNA accessibility to the cellular machineries which require DNA as a template. Histones thereby play a central role in transcription regulation, DNA repair, DNA replication and chromosomal stability. DNA accessibility is regulated via a complex set of post-translational modifications of histones, also called histone code, and nucleosome remodeling. The polypeptide is Histone H4, minor (Tetrahymena pyriformis).